A 480-amino-acid polypeptide reads, in one-letter code: Protein nucleotidyltransferase YdiU (480 aa).

The ATP site is built by Gly86, Gly88, Arg89, Lys109, Asp121, Gly122, Arg172, and Arg179. Catalysis depends on Asp248, which acts as the Proton acceptor. Asn249 and Asp258 together coordinate Mg(2+). Asp258 is an ATP binding site.

This sequence belongs to the SELO family. Mg(2+) is required as a cofactor. Mn(2+) serves as cofactor.

It catalyses the reaction L-seryl-[protein] + ATP = 3-O-(5'-adenylyl)-L-seryl-[protein] + diphosphate. It carries out the reaction L-threonyl-[protein] + ATP = 3-O-(5'-adenylyl)-L-threonyl-[protein] + diphosphate. The catalysed reaction is L-tyrosyl-[protein] + ATP = O-(5'-adenylyl)-L-tyrosyl-[protein] + diphosphate. The enzyme catalyses L-histidyl-[protein] + UTP = N(tele)-(5'-uridylyl)-L-histidyl-[protein] + diphosphate. It catalyses the reaction L-seryl-[protein] + UTP = O-(5'-uridylyl)-L-seryl-[protein] + diphosphate. It carries out the reaction L-tyrosyl-[protein] + UTP = O-(5'-uridylyl)-L-tyrosyl-[protein] + diphosphate. Its function is as follows. Nucleotidyltransferase involved in the post-translational modification of proteins. It can catalyze the addition of adenosine monophosphate (AMP) or uridine monophosphate (UMP) to a protein, resulting in modifications known as AMPylation and UMPylation. This Salmonella typhi protein is Protein nucleotidyltransferase YdiU.